Consider the following 365-residue polypeptide: Embryonic developmental protein tofu-6 (365 aa).

Positions 13 to 90 constitute an RRM domain; the sequence is AGFHIRNVPK…YSLKVSDHKN (78 aa).

In terms of biological role, required maternally for early embryonic cell divisions. May have a role in DNA replication. In Caenorhabditis briggsae, this protein is Embryonic developmental protein tofu-6.